Reading from the N-terminus, the 904-residue chain is DNA mismatch repair protein MutS (904 aa).

655 to 662 (GPNMGGKS) is an ATP binding site.

Belongs to the DNA mismatch repair MutS family.

Its function is as follows. This protein is involved in the repair of mismatches in DNA. It is possible that it carries out the mismatch recognition step. This protein has a weak ATPase activity. The protein is DNA mismatch repair protein MutS of Agrobacterium fabrum (strain C58 / ATCC 33970) (Agrobacterium tumefaciens (strain C58)).